The chain runs to 447 residues: Putative branched-chain amino acid carrier protein SE_1090 (447 aa).

12 helical membrane-spanning segments follow: residues 5 to 25 (TWII…LIFP), 40 to 60 (ILAF…VGAL), 74 to 94 (PRFS…LFAI), 114 to 134 (GNLA…YLCL), 143 to 163 (IGSL…IKGF), 193 to 213 (GYLT…VNAI), 229 to 249 (IIAG…LGYI), 290 to 310 (LLGI…IVSV), 317 to 337 (ILPK…SFIL), 350 to 370 (VPVL…ILIA), 382 to 402 (IPLI…QGWI), and 417 to 437 (LEWF…SYFV).

The protein belongs to the branched chain amino acid transporter family.

It is found in the cell membrane. Component of the transport system for branched-chain amino acids (leucine, isoleucine and valine), which is coupled to a proton motive force. The polypeptide is Putative branched-chain amino acid carrier protein SE_1090 (Staphylococcus epidermidis (strain ATCC 12228 / FDA PCI 1200)).